The sequence spans 309 residues: Elongation factor Ts (309 aa).

An involved in Mg(2+) ion dislocation from EF-Tu region spans residues 82-85; sequence TDFV.

Belongs to the EF-Ts family.

It is found in the cytoplasm. In terms of biological role, associates with the EF-Tu.GDP complex and induces the exchange of GDP to GTP. It remains bound to the aminoacyl-tRNA.EF-Tu.GTP complex up to the GTP hydrolysis stage on the ribosome. This chain is Elongation factor Ts, found in Rickettsia massiliae (strain Mtu5).